The sequence spans 461 residues: Type IV secretion system protein PtlD homolog (461 aa).

A signal peptide spans 1-24 (MAGLSRILLSCTLACLLAGQAAQA). 5 helical membrane passes run 118 to 138 (LQPLVYSMMTLLVLLTGYALL), 232 to 252 (WLLCAMIVAASAGGWLCLAAS), 253 to 273 (LLIVPGLIVTLLLSLGPLFLV), 294 to 314 (ALVFMALGTPAVGLLSDVLAG), and 333 to 353 (MLAATLCATATLMLLTLVPLA). A compositionally biased stretch (low complexity) spans 376 to 411 (AHRQAAARQYAPRPAAAAAAAGPHQAGTYAASATPA). The segment at 376-461 (AHRQAAARQY…RVLPRKPNLP (86 aa)) is disordered. The span at 439–453 (VRRDDRPAPAPDRRV) shows a compositional bias: basic and acidic residues.

The protein resides in the cell membrane. The chain is Type IV secretion system protein PtlD homolog (ptlD) from Bordetella bronchiseptica (strain ATCC BAA-588 / NCTC 13252 / RB50) (Alcaligenes bronchisepticus).